A 117-amino-acid chain; its full sequence is Large ribosomal subunit protein bL20 (117 aa).

It belongs to the bacterial ribosomal protein bL20 family.

Its function is as follows. Binds directly to 23S ribosomal RNA and is necessary for the in vitro assembly process of the 50S ribosomal subunit. It is not involved in the protein synthesizing functions of that subunit. The protein is Large ribosomal subunit protein bL20 of Wigglesworthia glossinidia brevipalpis.